The sequence spans 138 residues: MIKPIPRISSRRNGRIGSRKTGRRIPKGIIHVQASFNNTIVTVTDVRGRVVSWSSAGTSGFKGAKRGTPFAAQSAAVNAIRTVVDQGMQRAEVMIKGPGPGRDAALRAIRRSGILLSFVRDITPMPHNGCRPPKKRRV.

The interval 1–24 (MIKPIPRISSRRNGRIGSRKTGRR) is disordered. Over residues 9–24 (SSRRNGRIGSRKTGRR) the composition is skewed to basic residues.

The protein belongs to the universal ribosomal protein uS11 family. As to quaternary structure, part of the 30S ribosomal subunit.

Its subcellular location is the plastid. The protein resides in the chloroplast. This is Small ribosomal subunit protein uS11c from Lemna minor (Common duckweed).